The primary structure comprises 402 residues: S-adenosylmethionine synthase (402 aa).

His16 serves as a coordination point for ATP. Residue Asp18 participates in Mg(2+) binding. Glu44 serves as a coordination point for K(+). L-methionine contacts are provided by Glu57 and Gln103. The tract at residues 103-113 is flexible loop; it reads QSPDIAQGVDT. ATP-binding positions include 178 to 180, 249 to 250, Asp258, 264 to 265, Ala281, and Lys285; these read DGK, KF, and RK. Asp258 is an L-methionine binding site. Lys289 lines the L-methionine pocket.

It belongs to the AdoMet synthase family. In terms of assembly, homotetramer; dimer of dimers. Requires Mg(2+) as cofactor. K(+) is required as a cofactor.

The protein resides in the cytoplasm. It carries out the reaction L-methionine + ATP + H2O = S-adenosyl-L-methionine + phosphate + diphosphate. Its pathway is amino-acid biosynthesis; S-adenosyl-L-methionine biosynthesis; S-adenosyl-L-methionine from L-methionine: step 1/1. Functionally, catalyzes the formation of S-adenosylmethionine (AdoMet) from methionine and ATP. The overall synthetic reaction is composed of two sequential steps, AdoMet formation and the subsequent tripolyphosphate hydrolysis which occurs prior to release of AdoMet from the enzyme. This chain is S-adenosylmethionine synthase, found in Mycobacterium sp. (strain JLS).